We begin with the raw amino-acid sequence, 299 residues long: Oxygen-dependent coproporphyrinogen-III oxidase (299 aa).

Serine 92 lines the substrate pocket. A divalent metal cation is bound by residues histidine 96 and histidine 106. The Proton donor role is filled by histidine 106. 108 to 110 (NVR) serves as a coordination point for substrate. The a divalent metal cation site is built by histidine 145 and histidine 175. Positions 239-274 (YVEFNLVYDRGTLFGLQSGGRAESILMSLPPRVRWE) are important for dimerization. Residue 257–259 (GGR) coordinates substrate.

It belongs to the aerobic coproporphyrinogen-III oxidase family. Homodimer. It depends on a divalent metal cation as a cofactor.

It localises to the cytoplasm. It carries out the reaction coproporphyrinogen III + O2 + 2 H(+) = protoporphyrinogen IX + 2 CO2 + 2 H2O. It participates in porphyrin-containing compound metabolism; protoporphyrin-IX biosynthesis; protoporphyrinogen-IX from coproporphyrinogen-III (O2 route): step 1/1. Functionally, involved in the heme biosynthesis. Catalyzes the aerobic oxidative decarboxylation of propionate groups of rings A and B of coproporphyrinogen-III to yield the vinyl groups in protoporphyrinogen-IX. The protein is Oxygen-dependent coproporphyrinogen-III oxidase of Xanthomonas euvesicatoria pv. vesicatoria (strain 85-10) (Xanthomonas campestris pv. vesicatoria).